The primary structure comprises 327 residues: Urease accessory protein 4 (327 aa).

Asn120 is a glycosylation site (N-linked (GlcNAc...) asparagine). A helical transmembrane segment spans residues 239 to 259 (VYATVLIIGPHLTTLFSYLAY).

Belongs to the UreD family. In terms of assembly, URE4, URE6 and URE7 may form a complex that acts as a GTP-hydrolysis-dependent molecular chaperone, activating the urease apoprotein URE1.

The protein localises to the membrane. In terms of biological role, urease accessory protein required for the maturation and activation of urease via the functional incorporation of the urease nickel metallocenter. Plays a role in host brain invasion. This Cryptococcus neoformans var. grubii serotype A (strain H99 / ATCC 208821 / CBS 10515 / FGSC 9487) (Filobasidiella neoformans var. grubii) protein is Urease accessory protein 4.